The chain runs to 376 residues: Glutamate 5-kinase (376 aa).

Lys-15 contacts ATP. Residues Ser-56, Asp-143, and Asn-155 each coordinate substrate. 175 to 176 contributes to the ATP binding site; sequence SD. Residues 281 to 358 enclose the PUA domain; it reads KGTLTIDAGA…PDVMSILGIT (78 aa).

Belongs to the glutamate 5-kinase family.

The protein resides in the cytoplasm. It catalyses the reaction L-glutamate + ATP = L-glutamyl 5-phosphate + ADP. Its pathway is amino-acid biosynthesis; L-proline biosynthesis; L-glutamate 5-semialdehyde from L-glutamate: step 1/2. Functionally, catalyzes the transfer of a phosphate group to glutamate to form L-glutamate 5-phosphate. The polypeptide is Glutamate 5-kinase (Rhodopseudomonas palustris (strain BisB18)).